Here is a 65-residue protein sequence, read N- to C-terminus: Ferredoxin soy (65 aa).

One can recognise a 4Fe-4S ferredoxin-type domain in the interval 2–29; that stretch reads GVQVDKERCVGAGMCALTAPDVFTQDDD. [3Fe-4S] cluster is bound by residues cysteine 10, cysteine 16, and cysteine 55.

[3Fe-4S] cluster serves as cofactor.

In terms of biological role, electron transport protein for the cytochrome P-450-SOY system. In Streptomyces griseus, this protein is Ferredoxin soy (soyB).